The following is a 507-amino-acid chain: MVINIQPDEIGSIIRKQIKGYVPEMKVVNIGTVLQVGDGIARIHGLDEVMAGELVEFEDGTVGIALNLESDNVGAVLMGDGLTIREGGSVRATGKIAQIPVSDSFLGRVVNALAQPIDGKGQIPASEFRLIESSAPGIISRRSVYEPLQTGLIAIDSMIPIGRGQRELIIGDRQTGKTAVATDTILNQKGQNVICVYVAIGQKASSVAQVVDTFRERGALEYTIVVSETANSPATLQYLAPYTGAALAEYFMYRKQHTLIIYDDLSKQAQAYRQMSLLLKRPPGREAYPGDVFYLHSRLLERAAKLSTQLGEGSMTALPIVETQAGDVSAYIPTNVISITDGQIFLSADLFNAGIRPAINVGISVSRVGSAAQIKAMKQVAGKLKLELAQFAELEAFAQFASDLDKTTQNQLARGQRLRELLKQSQSAPLAVEEQVATIYTGVNGYLDVLDVEQVKRFLVQLREYVATSKPSFGEIIRSTKVFTEQAEALLKEAIKESTELFLLQER.

170 to 177 contributes to the ATP binding site; that stretch reads IGDRQTGK.

It belongs to the ATPase alpha/beta chains family. F-type ATPases have 2 components, CF(1) - the catalytic core - and CF(0) - the membrane proton channel. CF(1) has five subunits: alpha(3), beta(3), gamma(1), delta(1), epsilon(1). CF(0) has four main subunits: a, b, b' and c.

Its subcellular location is the plastid. It is found in the chloroplast thylakoid membrane. It carries out the reaction ATP + H2O + 4 H(+)(in) = ADP + phosphate + 5 H(+)(out). Its function is as follows. Produces ATP from ADP in the presence of a proton gradient across the membrane. The alpha chain is a regulatory subunit. The sequence is that of ATP synthase subunit alpha, chloroplastic from Adiantum capillus-veneris (Maidenhair fern).